A 471-amino-acid polypeptide reads, in one-letter code: Argininosuccinate lyase (471 aa).

It belongs to the lyase 1 family. Argininosuccinate lyase subfamily.

The protein localises to the cytoplasm. The catalysed reaction is 2-(N(omega)-L-arginino)succinate = fumarate + L-arginine. Its pathway is amino-acid biosynthesis; L-arginine biosynthesis; L-arginine from L-ornithine and carbamoyl phosphate: step 3/3. The sequence is that of Argininosuccinate lyase from Cereibacter sphaeroides (strain ATCC 17025 / ATH 2.4.3) (Rhodobacter sphaeroides).